Here is a 151-residue protein sequence, read N- to C-terminus: MNTTPVPPPETLTPRWYLVDAANQRLGRLAVVVAKLLRGKHKPNFTPHLDTGDYVIVINAEKVVVTGKKRTQKLYRRHSGRPGGMKVETFAQLQARLPERVIEKAVKGMLPHTRLGRRQFTKLKVYAGPHHPHEAQQPQVYPIHTIPGAKV.

The protein belongs to the universal ribosomal protein uL13 family. In terms of assembly, part of the 50S ribosomal subunit.

Its function is as follows. This protein is one of the early assembly proteins of the 50S ribosomal subunit, although it is not seen to bind rRNA by itself. It is important during the early stages of 50S assembly. The protein is Large ribosomal subunit protein uL13 of Synechococcus sp. (strain JA-3-3Ab) (Cyanobacteria bacterium Yellowstone A-Prime).